Here is a 279-residue protein sequence, read N- to C-terminus: Tryptophan synthase alpha chain (279 aa).

Active-site proton acceptor residues include Glu-50 and Asp-61.

Belongs to the TrpA family. In terms of assembly, tetramer of two alpha and two beta chains.

The enzyme catalyses (1S,2R)-1-C-(indol-3-yl)glycerol 3-phosphate + L-serine = D-glyceraldehyde 3-phosphate + L-tryptophan + H2O. Its pathway is amino-acid biosynthesis; L-tryptophan biosynthesis; L-tryptophan from chorismate: step 5/5. Functionally, the alpha subunit is responsible for the aldol cleavage of indoleglycerol phosphate to indole and glyceraldehyde 3-phosphate. The chain is Tryptophan synthase alpha chain from Mesorhizobium japonicum (strain LMG 29417 / CECT 9101 / MAFF 303099) (Mesorhizobium loti (strain MAFF 303099)).